Reading from the N-terminus, the 64-residue chain is Potassium channel toxin kappa-KTx 3.1 (64 aa).

The N-terminal stretch at 1–26 (MKSTLMTASVLILVLLSIVDYASVYA) is a signal peptide. A propeptide spanning residues 27 to 36 (EFIDSEISLE) is cleaved from the precursor. Cystine bridges form between Cys43/Cys61 and Cys47/Cys57.

It belongs to the short scorpion toxin superfamily. Potassium channel inhibitor kappa-KTx family. Kappa-KTx 3 subfamily. As to expression, expressed by the venom gland.

The protein resides in the secreted. Its function is as follows. Potassium channel inhibitor (Kv). The chain is Potassium channel toxin kappa-KTx 3.1 from Heterometrus petersii (Asian forest scorpion).